The chain runs to 345 residues: 3-dehydroquinate synthase (345 aa).

NAD(+) contacts are provided by residues 62 to 67 (DGEEYK), 96 to 100 (GVISD), 120 to 121 (TT), K133, K142, and 160 to 163 (FLKT). Zn(2+) is bound by residues E175, H233, and H250.

This sequence belongs to the sugar phosphate cyclases superfamily. Dehydroquinate synthase family. The cofactor is Co(2+). Requires Zn(2+) as cofactor. NAD(+) serves as cofactor.

Its subcellular location is the cytoplasm. It catalyses the reaction 7-phospho-2-dehydro-3-deoxy-D-arabino-heptonate = 3-dehydroquinate + phosphate. It participates in metabolic intermediate biosynthesis; chorismate biosynthesis; chorismate from D-erythrose 4-phosphate and phosphoenolpyruvate: step 2/7. Catalyzes the conversion of 3-deoxy-D-arabino-heptulosonate 7-phosphate (DAHP) to dehydroquinate (DHQ). The protein is 3-dehydroquinate synthase of Campylobacter concisus (strain 13826).